A 328-amino-acid chain; its full sequence is Glycerol-3-phosphate dehydrogenase [NAD(P)+] (328 aa).

4 residues coordinate NADPH: W15, R35, R36, and K105. Positions 105 and 131 each coordinate sn-glycerol 3-phosphate. A135 contributes to the NADPH binding site. Sn-glycerol 3-phosphate is bound by residues K186, D239, S249, R250, and N251. The Proton acceptor role is filled by K186. Residue R250 participates in NADPH binding. Positions 270 and 272 each coordinate NADPH.

This sequence belongs to the NAD-dependent glycerol-3-phosphate dehydrogenase family.

The protein resides in the cytoplasm. The enzyme catalyses sn-glycerol 3-phosphate + NAD(+) = dihydroxyacetone phosphate + NADH + H(+). The catalysed reaction is sn-glycerol 3-phosphate + NADP(+) = dihydroxyacetone phosphate + NADPH + H(+). It participates in membrane lipid metabolism; glycerophospholipid metabolism. In terms of biological role, catalyzes the reduction of the glycolytic intermediate dihydroxyacetone phosphate (DHAP) to sn-glycerol 3-phosphate (G3P), the key precursor for phospholipid synthesis. This is Glycerol-3-phosphate dehydrogenase [NAD(P)+] from Deinococcus radiodurans (strain ATCC 13939 / DSM 20539 / JCM 16871 / CCUG 27074 / LMG 4051 / NBRC 15346 / NCIMB 9279 / VKM B-1422 / R1).